Here is a 340-residue protein sequence, read N- to C-terminus: Quinic acid degradation cluster protein x (340 aa).

5 residues coordinate Mg(2+): Glu-90, Asp-115, Leu-117, Asp-118, and Asp-262. Glu-90 provides a ligand contact to substrate. Residues 117 to 120 and Asp-262 contribute to the substrate site; that span reads LDGT.

Belongs to the inositol monophosphatase superfamily.

In terms of biological role, part of the qa gene cluster that mediates the catabolism of quinic acid (QA) and as such, allows the use of QA as a sole carbon source. Its function within the pathway has not been determined yet but it probably plays a regulatory role. The qa cluster encodes 3 inducible enymes (qa-2, qa-3 and qa-4) catalyzing the first three reactions in the catabolism of quinic acid to protocatechuic acid (also known as 3,4-Dihydroxybenzoic acid). This Neurospora crassa (strain ATCC 24698 / 74-OR23-1A / CBS 708.71 / DSM 1257 / FGSC 987) protein is Quinic acid degradation cluster protein x.